The sequence spans 372 residues: Trihelix transcription factor GT-4 (372 aa).

A Myb-like domain is found at 47-111 (APKKRAETWA…MCTDKWRNIL (65 aa)). Ser-167 is modified (phosphoserine).

It is found in the nucleus. Functionally, probable transcription factor that binds specific DNA sequence. This is Trihelix transcription factor GT-4 (GT-4) from Arabidopsis thaliana (Mouse-ear cress).